Reading from the N-terminus, the 493-residue chain is Glycylpeptide N-tetradecanoyltransferase (493 aa).

The disordered stretch occupies residues 1-30; it reads MSDSKDSKGKAPQKPNDAEQTPGGKLTPQA. Tetradecanoyl-CoA-binding positions include 82-85, 216-218, and 224-228; these read FKFW, LCI, and SKRLA. Catalysis depends on leucine 493, which acts as the Proton acceptor; via carboxylate.

The protein belongs to the NMT family. As to quaternary structure, monomer.

It localises to the cytoplasm. It carries out the reaction N-terminal glycyl-[protein] + tetradecanoyl-CoA = N-tetradecanoylglycyl-[protein] + CoA + H(+). Adds a myristoyl group to the N-terminal glycine residue of certain cellular proteins. The polypeptide is Glycylpeptide N-tetradecanoyltransferase (swoF) (Emericella nidulans (strain FGSC A4 / ATCC 38163 / CBS 112.46 / NRRL 194 / M139) (Aspergillus nidulans)).